The chain runs to 123 residues: Small ribosomal subunit protein uS12c (123 aa).

It belongs to the universal ribosomal protein uS12 family. As to quaternary structure, part of the 30S ribosomal subunit.

Its subcellular location is the plastid. It localises to the chloroplast. In terms of biological role, with S4 and S5 plays an important role in translational accuracy. Located at the interface of the 30S and 50S subunits. The chain is Small ribosomal subunit protein uS12c (rps12) from Oenothera elata subsp. hookeri (Hooker's evening primrose).